Reading from the N-terminus, the 37-residue chain is Large ribosomal subunit protein bL36 (37 aa).

It belongs to the bacterial ribosomal protein bL36 family.

The chain is Large ribosomal subunit protein bL36 from Desulforudis audaxviator (strain MP104C).